Consider the following 717-residue polypeptide: Polyribonucleotide nucleotidyltransferase (717 aa).

2 residues coordinate Mg(2+): aspartate 486 and aspartate 492. The KH domain maps to 553-612 (PKIIQLQIDIDKISLVIGSTGKTVKAITDEFEVRVQIEQDGRITLFGTDSLKMQKAKARI). One can recognise an S1 motif domain in the interval 622–715 (GEIYEGVVKK…KFGKIELELV (94 aa)). Positions 650 to 683 (SNRPKSRDDRYGDMRHSRYGSGRHSRYGRDSRNT) are disordered. Residues 654 to 665 (KSRDDRYGDMRH) show a composition bias toward basic and acidic residues. Positions 666-675 (SRYGSGRHSR) are enriched in basic residues.

It belongs to the polyribonucleotide nucleotidyltransferase family. Requires Mg(2+) as cofactor.

Its subcellular location is the cytoplasm. It catalyses the reaction RNA(n+1) + phosphate = RNA(n) + a ribonucleoside 5'-diphosphate. In terms of biological role, involved in mRNA degradation. Catalyzes the phosphorolysis of single-stranded polyribonucleotides processively in the 3'- to 5'-direction. The polypeptide is Polyribonucleotide nucleotidyltransferase (Borrelia turicatae (strain 91E135)).